Reading from the N-terminus, the 212-residue chain is Bilin biosynthesis protein PecF (212 aa).

Belongs to the CpcE/RpcE/PecE family.

An enzyme involved in the biosynthesis of bilin. The sequence is that of Bilin biosynthesis protein PecF (pecF) from Mastigocladus laminosus (Fischerella sp.).